The primary structure comprises 157 residues: Endoribonuclease YbeY (157 aa).

Zn(2+) is bound by residues His112, His116, and His122.

This sequence belongs to the endoribonuclease YbeY family. It depends on Zn(2+) as a cofactor.

It is found in the cytoplasm. Functionally, single strand-specific metallo-endoribonuclease involved in late-stage 70S ribosome quality control and in maturation of the 3' terminus of the 16S rRNA. In Marinobacter nauticus (strain ATCC 700491 / DSM 11845 / VT8) (Marinobacter aquaeolei), this protein is Endoribonuclease YbeY.